The chain runs to 412 residues: Putative oxidoreductase bli-4, mitochondrial (412 aa).

Residues 1-55 (MSTKLCQRIARTATLSPTSLVPRSSRLIPIVSSAAVRPSSAIPTRRPFSTTESRY) constitute a mitochondrion transit peptide. Residues isoleucine 108, asparagine 120, asparagine 186, tyrosine 269, lysine 273, valine 308, threonine 310, and glutamine 312 each contribute to the NADP(+) site. The active-site Proton donor is the tyrosine 269. Lysine 273 serves as the catalytic Lowers pKa of active site Tyr.

It belongs to the short-chain dehydrogenases/reductases (SDR) family.

It localises to the mitochondrion. In terms of biological role, may play a role as an NAD-dependent dehydrogenase in the mitochondria. This is Putative oxidoreductase bli-4, mitochondrial (bli-4) from Neurospora crassa (strain ATCC 24698 / 74-OR23-1A / CBS 708.71 / DSM 1257 / FGSC 987).